The chain runs to 155 residues: Ribonuclease H (155 aa).

Residues 4–145 (NISKVVIYTD…ADKLAAQGRQ (142 aa)) form the RNase H type-1 domain. Residues Asp-13, Glu-51, Asp-73, and Asp-137 each coordinate Mg(2+).

The protein belongs to the RNase H family. As to quaternary structure, monomer. The cofactor is Mg(2+).

The protein localises to the cytoplasm. It carries out the reaction Endonucleolytic cleavage to 5'-phosphomonoester.. Functionally, endonuclease that specifically degrades the RNA of RNA-DNA hybrids. This Rickettsia canadensis (strain McKiel) protein is Ribonuclease H.